We begin with the raw amino-acid sequence, 471 residues long: Tryptophan--tRNA ligase, cytoplasmic (471 aa).

In terms of domain architecture, WHEP-TRS spans 8-64 (SLLELFNSIATQGELVRSLKAGNASKDEIDSAVKMLVSLKMSYKAAAGEDYKADCPP). The disordered stretch occupies residues 59–79 (KADCPPGNPAPTSNHGPDATE). Lys154 is subject to N6-succinyllysine. The short motif at 164–173 (PSSEAMHVGH) is the 'HIGH' region element. Positions 349–353 (KMSAS) match the 'KMSKS' region motif. A Phosphoserine modification is found at Ser351.

It belongs to the class-I aminoacyl-tRNA synthetase family. In terms of assembly, homodimer. Interacts with an oxidized form of GAPDH. GAPDH stimulates the aminoacylation activity of isoform 2. Post-translationally, proteolytic cleavage generates 2 forms; T1-TrpRS and T2-TrpRS.

Its subcellular location is the cytoplasm. It carries out the reaction tRNA(Trp) + L-tryptophan + ATP = L-tryptophyl-tRNA(Trp) + AMP + diphosphate + H(+). Its function is as follows. Catalyzes the attachment of tryptophan to tRNA(Trp) in a two-step reaction: tryptophan is first activated by ATP to form Trp-AMP and then transferred to the acceptor end of the tRNA(Trp). Has no angiostatic activity. Functionally, possesses an angiostatic activity but has no aminoacylation activity. Inhibits fluid shear stress-activated responses of endothelial cells. Regulates ERK, Akt, and eNOS activation pathways that are associated with angiogenesis, cytoskeletal reorganization and shear stress-responsive gene expression. In terms of biological role, has an angiostatic activity. The protein is Tryptophan--tRNA ligase, cytoplasmic of Homo sapiens (Human).